Here is an 80-residue protein sequence, read N- to C-terminus: Cell division protein ZapB (80 aa).

A coiled-coil region spans residues 3-80; the sequence is FEVFEKLEAK…ALLGKMNEVN (78 aa).

The protein belongs to the ZapB family. As to quaternary structure, homodimer. The ends of the coiled-coil dimer bind to each other, forming polymers. Interacts with FtsZ.

The protein localises to the cytoplasm. Its function is as follows. Non-essential, abundant cell division factor that is required for proper Z-ring formation. It is recruited early to the divisome by direct interaction with FtsZ, stimulating Z-ring assembly and thereby promoting cell division earlier in the cell cycle. Its recruitment to the Z-ring requires functional FtsA or ZipA. The chain is Cell division protein ZapB from Edwardsiella ictaluri (strain 93-146).